Reading from the N-terminus, the 321-residue chain is ATP-dependent 6-phosphofructokinase (321 aa).

G12 contacts ATP. ADP contacts are provided by residues R22 to R26 and R55 to D60. ATP is bound by residues R73–F74 and G103–S106. A Mg(2+)-binding site is contributed by D104. T127 to D129 lines the substrate pocket. The active-site Proton acceptor is D129. R156 is an ADP binding site. Substrate contacts are provided by residues R164 and M171–R173. Residues G187 to E189 and K215 to H217 contribute to the ADP site. Residues E224, R245, and H251–R254 each bind substrate.

Belongs to the phosphofructokinase type A (PFKA) family. ATP-dependent PFK group I subfamily. Prokaryotic clade 'B1' sub-subfamily. As to quaternary structure, homotetramer. Requires Mg(2+) as cofactor.

It is found in the cytoplasm. It carries out the reaction beta-D-fructose 6-phosphate + ATP = beta-D-fructose 1,6-bisphosphate + ADP + H(+). Its pathway is carbohydrate degradation; glycolysis; D-glyceraldehyde 3-phosphate and glycerone phosphate from D-glucose: step 3/4. With respect to regulation, allosterically activated by ADP and other diphosphonucleosides, and allosterically inhibited by phosphoenolpyruvate. In terms of biological role, catalyzes the phosphorylation of D-fructose 6-phosphate to fructose 1,6-bisphosphate by ATP, the first committing step of glycolysis. In Mannheimia succiniciproducens (strain KCTC 0769BP / MBEL55E), this protein is ATP-dependent 6-phosphofructokinase.